Here is a 479-residue protein sequence, read N- to C-terminus: Cardiolipin synthase A (479 aa).

The next 2 helical transmembrane spans lie at 8 to 28 and 38 to 58; these read FFGY…LHAV and IAWA…YLVF. 2 PLD phosphodiesterase domains span residues 218–245 and 392–419; these read VNFR…GDEY and QPGF…DNRS. Residues histidine 223, lysine 225, aspartate 230, histidine 397, lysine 399, and aspartate 404 contribute to the active site.

It belongs to the phospholipase D family. Cardiolipin synthase subfamily. ClsA sub-subfamily.

The protein localises to the cell inner membrane. The enzyme catalyses 2 a 1,2-diacyl-sn-glycero-3-phospho-(1'-sn-glycerol) = a cardiolipin + glycerol. Functionally, catalyzes the reversible phosphatidyl group transfer from one phosphatidylglycerol molecule to another to form cardiolipin (CL) (diphosphatidylglycerol) and glycerol. The polypeptide is Cardiolipin synthase A (Pseudomonas putida (strain W619)).